The sequence spans 260 residues: Flap endonuclease Xni (260 aa).

Residue D104 coordinates Mg(2+). In terms of domain architecture, 5'-3' exonuclease spans 160-250 (VSPQQLTDYW…NGNLQQLRLP (91 aa)). 5 residues coordinate K(+): L171, A172, P180, V182, and I185. The interval 184–189 (GIGPKS) is interaction with DNA.

The protein belongs to the Xni family. Mg(2+) serves as cofactor. Requires K(+) as cofactor.

In terms of biological role, has flap endonuclease activity. During DNA replication, flap endonucleases cleave the 5'-overhanging flap structure that is generated by displacement synthesis when DNA polymerase encounters the 5'-end of a downstream Okazaki fragment. This Pectobacterium atrosepticum (strain SCRI 1043 / ATCC BAA-672) (Erwinia carotovora subsp. atroseptica) protein is Flap endonuclease Xni.